The following is a 119-amino-acid chain: Type II secretion system protein I (119 aa).

Residues 1–5 (MNARG) constitute a propeptide, leader sequence. M6 is modified (N-methylmethionine). Residues 6-26 (MTLLEVMVALAVFAIAGLAVM) form a helical membrane-spanning segment.

The protein belongs to the GSP I family. Type II secretion is composed of four main components: the outer membrane complex, the inner membrane complex, the cytoplasmic secretion ATPase and the periplasm-spanning pseudopilus. Interacts with core component ExeG. Cleaved by prepilin peptidase. Post-translationally, methylated by prepilin peptidase at the amino group of the N-terminal methionine once the leader sequence is cleaved by prepilin peptidase.

Its subcellular location is the cell inner membrane. Component of the type II secretion system required for the energy-dependent secretion of extracellular factors such as proteases and toxins from the periplasm. Part of the pseudopilus tip complex that is critical for the recognition and binding of secretion substrates. In Aeromonas hydrophila, this protein is Type II secretion system protein I (exeI).